Here is a 330-residue protein sequence, read N- to C-terminus: L-asparaginase (330 aa).

An Asparaginase/glutaminase domain is found at 4 to 330 (PQVTILATGG…EAIQKIFSTY (327 aa)). Thr14 functions as the O-isoaspartyl threonine intermediate in the catalytic mechanism. A substrate-binding site is contributed by 93 to 94 (TD).

The protein belongs to the asparaginase 1 family. In terms of assembly, homotetramer.

The protein localises to the cytoplasm. The catalysed reaction is L-asparagine + H2O = L-aspartate + NH4(+). This chain is L-asparaginase (ansA), found in Wolinella succinogenes (strain ATCC 29543 / DSM 1740 / CCUG 13145 / JCM 31913 / LMG 7466 / NCTC 11488 / FDC 602W) (Vibrio succinogenes).